Reading from the N-terminus, the 285-residue chain is 4-diphosphocytidyl-2-C-methyl-D-erythritol kinase (285 aa).

The active site involves lysine 11. Position 93–103 (93–103 (PLAAGLAGGSA)) interacts with ATP. Aspartate 135 is a catalytic residue.

The protein belongs to the GHMP kinase family. IspE subfamily.

It catalyses the reaction 4-CDP-2-C-methyl-D-erythritol + ATP = 4-CDP-2-C-methyl-D-erythritol 2-phosphate + ADP + H(+). It functions in the pathway isoprenoid biosynthesis; isopentenyl diphosphate biosynthesis via DXP pathway; isopentenyl diphosphate from 1-deoxy-D-xylulose 5-phosphate: step 3/6. Its function is as follows. Catalyzes the phosphorylation of the position 2 hydroxy group of 4-diphosphocytidyl-2C-methyl-D-erythritol. The protein is 4-diphosphocytidyl-2-C-methyl-D-erythritol kinase of Moorella thermoacetica (strain ATCC 39073 / JCM 9320).